The sequence spans 369 residues: MTERQKTYFDLSIGGKPAGRVVFEVYSDVTPKTAENFVRLCAGDAGECRTKPGVPLCYQGSLFHRVIKGFMCQFGDFTNGDGTGGESIYGEKFEDENFARKHDRPFLLSMANAGPNTNGSQCFITCAPTPHLDGKHVVFGEVIQGKRVVRAIERQETAADRPLADVRIDACGILPASYEVPADAEATPADEYGDDYEETLADDAKVDLADPRSVIRAVEAVKAIGTAQLQAARFDVAVQKYAKAAGFLQEYFPDDLPDADVAALEQLKVAVHLNLALAALKAGNHQRVLSAASEVLHGAADDKAKAKALYRRGLAYHHLKDPEMALTDLELAATYQPGDAGIAQAIVNARALKQKLREQQKKALSKMFS.

The PPIase cyclophilin-type domain maps to 8 to 173; sequence YFDLSIGGKP…ADVRIDACGI (166 aa). TPR repeat units lie at residues 218–251, 269–302, and 306–339; these read VEAV…LQEY, VAVH…AADD, and AKAL…QPGD.

Belongs to the cyclophilin-type PPIase family. PPIase D subfamily.

It is found in the cytoplasm. The enzyme catalyses [protein]-peptidylproline (omega=180) = [protein]-peptidylproline (omega=0). PPIases accelerate the folding of proteins. It catalyzes the cis-trans isomerization of proline imidic peptide bonds in oligopeptides. The polypeptide is Peptidyl-prolyl cis-trans isomerase D (CPR6) (Eremothecium gossypii (strain ATCC 10895 / CBS 109.51 / FGSC 9923 / NRRL Y-1056) (Yeast)).